The sequence spans 107 residues: Iron-binding protein IscA (107 aa).

Residues C35, C99, and C101 each contribute to the Fe cation site.

This sequence belongs to the HesB/IscA family. In terms of assembly, homodimer; may form tetramers and higher multimers. Fe cation is required as a cofactor.

Functionally, is able to transfer iron-sulfur clusters to apo-ferredoxin. Multiple cycles of [2Fe2S] cluster formation and transfer are observed, suggesting that IscA acts catalytically. Recruits intracellular free iron so as to provide iron for the assembly of transient iron-sulfur cluster in IscU in the presence of IscS, L-cysteine and the thioredoxin reductase system TrxA/TrxB. This Pectobacterium atrosepticum (strain SCRI 1043 / ATCC BAA-672) (Erwinia carotovora subsp. atroseptica) protein is Iron-binding protein IscA.